The sequence spans 231 residues: Large ribosomal subunit protein uL1 (231 aa).

It belongs to the universal ribosomal protein uL1 family. In terms of assembly, part of the 50S ribosomal subunit.

Its function is as follows. Binds directly to 23S rRNA. The L1 stalk is quite mobile in the ribosome, and is involved in E site tRNA release. Protein L1 is also a translational repressor protein, it controls the translation of the L11 operon by binding to its mRNA. The chain is Large ribosomal subunit protein uL1 from Polaromonas naphthalenivorans (strain CJ2).